The chain runs to 273 residues: Tyrosinase (273 aa).

Residues 1 to 18 (MCLLALGFLLGILQPASG) form the signal peptide. Residues N86 and N169 are each glycosylated (N-linked (GlcNAc...) asparagine). H180, H202, and H211 together coordinate Cu cation. N-linked (GlcNAc...) asparagine glycosylation occurs at N230.

Belongs to the tyrosinase family. It depends on Cu(2+) as a cofactor.

Its subcellular location is the melanosome membrane. It carries out the reaction 2 L-dopa + O2 = 2 L-dopaquinone + 2 H2O. It catalyses the reaction L-tyrosine + O2 = L-dopaquinone + H2O. This is a copper-containing oxidase that functions in the formation of pigments such as melanins and other polyphenolic compounds. This chain is Tyrosinase (TYR), found in Pelodiscus sinensis (Chinese softshell turtle).